The chain runs to 194 residues: Large ribosomal subunit protein eL15 (194 aa).

Positions 164-194 are disordered; that stretch reads SAGKKGRGLRNKGKGAEKVRPSVRANKGKTK. Basic residues predominate over residues 167–176; the sequence is KKGRGLRNKG.

This sequence belongs to the eukaryotic ribosomal protein eL15 family.

The protein is Large ribosomal subunit protein eL15 of Thermococcus gammatolerans (strain DSM 15229 / JCM 11827 / EJ3).